Reading from the N-terminus, the 313-residue chain is Protoheme IX farnesyltransferase (313 aa).

Helical transmembrane passes span 33-53, 59-79, 107-127, 129-149, 162-182, 188-208, 212-232, 252-272, and 292-312; these read IALMKLRVVELLLVSTVPVML, MPSWWLIAVTLLAGTLSAGSA, VEPAQALRFGIALGIISTLMF, LLVNWTSAVLSVGAIAFYVFV, IVIGGAAGCFPVLIGWSAVTG, AVLLFAVVFFWTPPHFWALAI, DDYAAAGVPMLPVVATLEVVT, VADIGLVYLVPAVLLGAWFVA, and LFHMSITYLTLLFAALAAAAL.

The protein belongs to the UbiA prenyltransferase family. Protoheme IX farnesyltransferase subfamily.

Its subcellular location is the cell membrane. It carries out the reaction heme b + (2E,6E)-farnesyl diphosphate + H2O = Fe(II)-heme o + diphosphate. It participates in porphyrin-containing compound metabolism; heme O biosynthesis; heme O from protoheme: step 1/1. Converts heme B (protoheme IX) to heme O by substitution of the vinyl group on carbon 2 of heme B porphyrin ring with a hydroxyethyl farnesyl side group. This chain is Protoheme IX farnesyltransferase, found in Parafrankia sp. (strain EAN1pec).